The primary structure comprises 655 residues: Serine/threonine-protein kinase SKM1 (655 aa).

In terms of domain architecture, PH spans 3–118 (GVKKEGWISY…WLDAIFAKCP (116 aa)). In terms of domain architecture, CRIB spans 123 to 136 (VSSPTNFTHKVHVG). 2 stretches are compositionally biased toward basic and acidic residues: residues 265–276 (EEGRVHVSKEST) and 318–327 (KNHDSKTKWH). Positions 265–327 (EEGRVHVSKE…KNHDSKTKWH (63 aa)) are disordered. Residues 360 to 639 (FQLVEKAGQG…VRKLLTFEFL (280 aa)) enclose the Protein kinase domain. ATP is bound by residues 366 to 374 (AGQGASGAV) and lysine 406. Aspartate 507 (proton acceptor) is an active-site residue.

The protein belongs to the protein kinase superfamily. STE Ser/Thr protein kinase family. STE20 subfamily.

It catalyses the reaction L-seryl-[protein] + ATP = O-phospho-L-seryl-[protein] + ADP + H(+). The enzyme catalyses L-threonyl-[protein] + ATP = O-phospho-L-threonyl-[protein] + ADP + H(+). Its function is as follows. May be involved in cellular signaling or cytoskeletal functions. May play a role in morphogenetic control. The protein is Serine/threonine-protein kinase SKM1 (SKM1) of Saccharomyces cerevisiae (strain ATCC 204508 / S288c) (Baker's yeast).